Consider the following 169-residue polypeptide: Aspartic protease inhibitor 3 (169 aa).

Residue Asn-1 is glycosylated (N-linked (GlcNAc...) asparagine). 2 disulfides stabilise this stretch: Cys-30/Cys-75 and Cys-124/Cys-134.

It belongs to the protease inhibitor I3 (leguminous Kunitz-type inhibitor) family.

The protein localises to the vacuole. In terms of biological role, inhibitor of cathepsin D (aspartic protease). May also inhibit trypsin and chymotrypsin (serine proteases). Protects the plant by inhibiting proteases of invading organisms. The sequence is that of Aspartic protease inhibitor 3 from Solanum tuberosum (Potato).